A 422-amino-acid polypeptide reads, in one-letter code: S-adenosylmethionine synthase (422 aa).

ATP is bound at residue H16. Residue D18 coordinates Mg(2+). E44 contributes to the K(+) binding site. 2 residues coordinate L-methionine: E57 and Q100. Positions 100-110 (QSPDISQGVSA) are flexible loop. ATP-binding positions include 175 to 177 (DGK), 251 to 252 (KF), D260, 266 to 267 (RK), A283, and K287. D260 contributes to the L-methionine binding site. Residue K291 participates in L-methionine binding.

Belongs to the AdoMet synthase family. As to quaternary structure, homotetramer; dimer of dimers. Mg(2+) serves as cofactor. K(+) is required as a cofactor.

It is found in the cytoplasm. The catalysed reaction is L-methionine + ATP + H2O = S-adenosyl-L-methionine + phosphate + diphosphate. It functions in the pathway amino-acid biosynthesis; S-adenosyl-L-methionine biosynthesis; S-adenosyl-L-methionine from L-methionine: step 1/1. In terms of biological role, catalyzes the formation of S-adenosylmethionine (AdoMet) from methionine and ATP. The overall synthetic reaction is composed of two sequential steps, AdoMet formation and the subsequent tripolyphosphate hydrolysis which occurs prior to release of AdoMet from the enzyme. In Rippkaea orientalis (strain PCC 8801 / RF-1) (Cyanothece sp. (strain PCC 8801)), this protein is S-adenosylmethionine synthase.